The following is a 598-amino-acid chain: Aspartate--tRNA(Asp/Asn) ligase (598 aa).

Residue Glu174 participates in L-aspartate binding. Positions 198 to 201 are aspartate; the sequence is QQLK. Arg220 is a binding site for L-aspartate. ATP is bound by residues 220–222 and Gln229; that span reads RDE. His458 contacts L-aspartate. Glu492 contributes to the ATP binding site. L-aspartate is bound at residue Arg499. 544 to 547 provides a ligand contact to ATP; that stretch reads GIDR.

It belongs to the class-II aminoacyl-tRNA synthetase family. Type 1 subfamily. Homodimer.

The protein resides in the cytoplasm. The enzyme catalyses tRNA(Asx) + L-aspartate + ATP = L-aspartyl-tRNA(Asx) + AMP + diphosphate. Functionally, aspartyl-tRNA synthetase with relaxed tRNA specificity since it is able to aspartylate not only its cognate tRNA(Asp) but also tRNA(Asn). Reaction proceeds in two steps: L-aspartate is first activated by ATP to form Asp-AMP and then transferred to the acceptor end of tRNA(Asp/Asn). This chain is Aspartate--tRNA(Asp/Asn) ligase, found in Dehalococcoides mccartyi (strain ATCC BAA-2266 / KCTC 15142 / 195) (Dehalococcoides ethenogenes (strain 195)).